The sequence spans 100 residues: Urease subunit gamma (100 aa).

It belongs to the urease gamma subunit family. Heterotrimer of UreA (gamma), UreB (beta) and UreC (alpha) subunits. Three heterotrimers associate to form the active enzyme.

It is found in the cytoplasm. It carries out the reaction urea + 2 H2O + H(+) = hydrogencarbonate + 2 NH4(+). Its pathway is nitrogen metabolism; urea degradation; CO(2) and NH(3) from urea (urease route): step 1/1. Ureolysis may allow urea to be employed as a nitrogen source for growth and produces ammonia which may protect from killing at low pH. This Streptococcus salivarius (strain 57.I) protein is Urease subunit gamma.